The chain runs to 301 residues: 33 kDa chaperonin (301 aa).

2 cysteine pairs are disulfide-bonded: Cys-239–Cys-241 and Cys-272–Cys-275.

It belongs to the HSP33 family. Post-translationally, under oxidizing conditions two disulfide bonds are formed involving the reactive cysteines. Under reducing conditions zinc is bound to the reactive cysteines and the protein is inactive.

The protein localises to the cytoplasm. Redox regulated molecular chaperone. Protects both thermally unfolding and oxidatively damaged proteins from irreversible aggregation. Plays an important role in the bacterial defense system toward oxidative stress. The protein is 33 kDa chaperonin of Trichormus variabilis (strain ATCC 29413 / PCC 7937) (Anabaena variabilis).